Reading from the N-terminus, the 223-residue chain is Phosphoribosylformylglycinamidine synthase subunit PurQ (223 aa).

The Glutamine amidotransferase type-1 domain occupies 3 to 223 (SAVILLPGLN…LFAGALGITA (221 aa)). C87 functions as the Nucleophile in the catalytic mechanism. Catalysis depends on residues H197 and E199.

As to quaternary structure, part of the FGAM synthase complex composed of 1 PurL, 1 PurQ and 2 PurS subunits.

It is found in the cytoplasm. The catalysed reaction is N(2)-formyl-N(1)-(5-phospho-beta-D-ribosyl)glycinamide + L-glutamine + ATP + H2O = 2-formamido-N(1)-(5-O-phospho-beta-D-ribosyl)acetamidine + L-glutamate + ADP + phosphate + H(+). The enzyme catalyses L-glutamine + H2O = L-glutamate + NH4(+). It functions in the pathway purine metabolism; IMP biosynthesis via de novo pathway; 5-amino-1-(5-phospho-D-ribosyl)imidazole from N(2)-formyl-N(1)-(5-phospho-D-ribosyl)glycinamide: step 1/2. Its function is as follows. Part of the phosphoribosylformylglycinamidine synthase complex involved in the purines biosynthetic pathway. Catalyzes the ATP-dependent conversion of formylglycinamide ribonucleotide (FGAR) and glutamine to yield formylglycinamidine ribonucleotide (FGAM) and glutamate. The FGAM synthase complex is composed of three subunits. PurQ produces an ammonia molecule by converting glutamine to glutamate. PurL transfers the ammonia molecule to FGAR to form FGAM in an ATP-dependent manner. PurS interacts with PurQ and PurL and is thought to assist in the transfer of the ammonia molecule from PurQ to PurL. The sequence is that of Phosphoribosylformylglycinamidine synthase subunit PurQ from Brucella suis biovar 1 (strain 1330).